A 527-amino-acid polypeptide reads, in one-letter code: Organic cation/carnitine transporter 2 (527 aa).

The Cytoplasmic portion of the chain corresponds to 1-27 (MAEPTQPLLTDSNSSSPRSLDDTIESY). A helical transmembrane segment spans residues 28–48 (IGSFGWAQFLQAALVSFSGVF). The Extracellular segment spans residues 49–119 (DAQQTFISVF…SFVKGLPESS (71 aa)). A helical membrane pass occupies residues 120 to 140 (FFVGCLIGGLVLSTLADSSLG). Topologically, residues 141 to 149 (RKNMLFLSC) are cytoplasmic. A helical transmembrane segment spans residues 150 to 170 (LVMAISTMLTVFSPNIWVYAV). Topologically, residues 171–176 (LRFVNG) are extracellular. A helical membrane pass occupies residues 177–195 (FGRATIGTCALVLSTELVG). 190–197 (STELVGKK) serves as a coordination point for ATP. The Cytoplasmic portion of the chain corresponds to 196-201 (KKWRGR). A helical membrane pass occupies residues 202–222 (VGIMSFFGFMLGFLSLPLMAY). Over 223 to 230 (MNRGSSWR) the chain is Extracellular. Residues 231-251 (ILYAWTSIPTIIYCVLVRFFV) form a helical membrane-spanning segment. Topologically, residues 252–326 (CESPRWLFVR…LVEKRWALKR (75 aa)) are cytoplasmic. Residues 327 to 347 (LSAVMAIAFGIGLVYYGMPLA) traverse the membrane as a helical segment. The Extracellular segment spans residues 348–356 (LSNLDFNIY). A helical membrane pass occupies residues 357–377 (LSAAFNALMDLPANLITLFLV). The Cytoplasmic portion of the chain corresponds to 378 to 385 (DKLSRRNA). The helical transmembrane segment at 386–406 (LIGFTALGGVSSVLIFALHNM) threads the bilayer. The Extracellular portion of the chain corresponds to 407–415 (RIGNHGALQ). The chain crosses the membrane as a helical span at residues 416–436 (LALELISYFSACSAFNMEMIY). Topologically, residues 437-448 (TIELFPTCVRNS) are cytoplasmic. A helical transmembrane segment spans residues 449–469 (AIAMARQALVLGGVFSPIMVA). Residues 470–475 (AGRKNA) lie on the Extracellular side of the membrane. A helical membrane pass occupies residues 476 to 496 (FWSFGLFGLAIGLLGLFAVGL). Residues 497–527 (PETRGSDLCDTMDEEECKDRRSKVAVNNVIA) lie on the Cytoplasmic side of the membrane.

Belongs to the major facilitator (TC 2.A.1) superfamily. Organic cation transporter (TC 2.A.1.19) family. In terms of tissue distribution, weakly expressed in roots, including tips and initiation site of lateral roots, siliques and flowers, especially in pollen and stigma.

The protein resides in the vacuole membrane. Functionally, high affinity carnitine transporter involved in the active cellular uptake of carnitine. Also transports organic cations. The sequence is that of Organic cation/carnitine transporter 2 (OCT2) from Arabidopsis thaliana (Mouse-ear cress).